A 60-amino-acid chain; its full sequence is Large ribosomal subunit protein bL32 (60 aa).

Residues 1 to 16 show a composition bias toward basic residues; sequence MAVPKRKTTPSKRGMR. The tract at residues 1–34 is disordered; that stretch reads MAVPKRKTTPSKRGMRRAHDALSSPVYIEDKDSG.

Belongs to the bacterial ribosomal protein bL32 family.

In Maricaulis maris (strain MCS10) (Caulobacter maris), this protein is Large ribosomal subunit protein bL32.